A 341-amino-acid polypeptide reads, in one-letter code: Heat-inducible transcription repressor HrcA (341 aa).

The protein belongs to the HrcA family.

Functionally, negative regulator of class I heat shock genes (grpE-dnaK-dnaJ and groELS operons). Prevents heat-shock induction of these operons. This chain is Heat-inducible transcription repressor HrcA, found in Corynebacterium jeikeium (strain K411).